Reading from the N-terminus, the 283-residue chain is Myeloid differentiation primary response protein MyD88-A (283 aa).

Positions 27-105 (RLCLYLNPDA…DILTDLGPLI (79 aa)) constitute a Death domain. The interval 106–143 (EADCMKYLEKKHVPLPIQDDKVDSSEQYRITKSDDPYG) is intermediate domain. One can recognise a TIR domain in the interval 147–281 (ETFDAFICYC…WFWDKLAKAL (135 aa)).

The protein localises to the cytoplasm. Its function is as follows. Adapter protein involved in the Toll-like receptor and IL-1 receptor signaling pathway in the innate immune response. Activates expression of target genes in the Spemann organizer region during early embryonic development. Is required for normal axis formation. The polypeptide is Myeloid differentiation primary response protein MyD88-A (myd88-a) (Xenopus laevis (African clawed frog)).